Reading from the N-terminus, the 170-residue chain is Peptide deformylase (170 aa).

Fe cation-binding residues include C94 and H136. E137 is a catalytic residue. H140 lines the Fe cation pocket.

The protein belongs to the polypeptide deformylase family. The cofactor is Fe(2+).

It catalyses the reaction N-terminal N-formyl-L-methionyl-[peptide] + H2O = N-terminal L-methionyl-[peptide] + formate. In terms of biological role, removes the formyl group from the N-terminal Met of newly synthesized proteins. Requires at least a dipeptide for an efficient rate of reaction. N-terminal L-methionine is a prerequisite for activity but the enzyme has broad specificity at other positions. This chain is Peptide deformylase, found in Wolinella succinogenes (strain ATCC 29543 / DSM 1740 / CCUG 13145 / JCM 31913 / LMG 7466 / NCTC 11488 / FDC 602W) (Vibrio succinogenes).